We begin with the raw amino-acid sequence, 304 residues long: UDP-N-acetylenolpyruvoylglucosamine reductase (304 aa).

The FAD-binding PCMH-type domain occupies 31-196 (KVGGPADYLA…ISAKFNLKPG (166 aa)). Arg-175 is a catalytic residue. Ser-225 functions as the Proton donor in the catalytic mechanism. The active site involves Glu-295.

The protein belongs to the MurB family. FAD serves as cofactor.

It localises to the cytoplasm. It carries out the reaction UDP-N-acetyl-alpha-D-muramate + NADP(+) = UDP-N-acetyl-3-O-(1-carboxyvinyl)-alpha-D-glucosamine + NADPH + H(+). Its pathway is cell wall biogenesis; peptidoglycan biosynthesis. Cell wall formation. This is UDP-N-acetylenolpyruvoylglucosamine reductase from Streptococcus thermophilus (strain CNRZ 1066).